The sequence spans 160 residues: MSTLKKPDLTDTKLRAKLAKGMGHNYYGEPAWPNDLLYIFPVVILGTIACVVGLAVLDPAFLGDKANPFATPLEILPEWYLYPVFQILRVVPNKLLGIALQTLIPLGLMILPFIENINKFANPFRRPVAMSLFLFGTVLTMYLGIGACLPIDKSLTLGLF.

3 helical membrane-spanning segments follow: residues 36–56 (LLYI…GLAV), 95–115 (LLGI…PFIE), and 131–151 (SLFL…CLPI).

This sequence belongs to the cytochrome b family. PetD subfamily. The 4 large subunits of the cytochrome b6-f complex are cytochrome b6, subunit IV (17 kDa polypeptide, PetD), cytochrome f and the Rieske protein, while the 4 small subunits are PetG, PetL, PetM and PetN. The complex functions as a dimer.

The protein resides in the cellular thylakoid membrane. Component of the cytochrome b6-f complex, which mediates electron transfer between photosystem II (PSII) and photosystem I (PSI), cyclic electron flow around PSI, and state transitions. The chain is Cytochrome b6-f complex subunit 4 from Prochlorococcus marinus (strain NATL2A).